A 584-amino-acid chain; its full sequence is Levansucrase (584 aa).

Positions Met1 to Ala30 are cleaved as a signal peptide. The residue at position 31 (Gln31) is a Pyrrolidone carboxylic acid. 5 residues coordinate sucrose: Trp134, Asp135, Ser225, Arg308, and Asp309. Asp135 acts as the Nucleophile in catalysis. Cys339 and Cys395 are oxidised to a cystine. The active-site Proton donor/acceptor is the Glu401.

The protein belongs to the glycosyl hydrolase 68 family. Monomer. Post-translationally, the N-terminus is blocked. The N-terminal Gln is cyclized to a pyroglutamic acid.

Its subcellular location is the secreted. The enzyme catalyses [6)-beta-D-fructofuranosyl-(2-&gt;](n) alpha-D-glucopyranoside + sucrose = [6)-beta-D-fructofuranosyl-(2-&gt;](n+1) alpha-D-glucopyranoside + D-glucose. Strongly inhibited by Hg(2+) and slightly activated by Co(2+). Not inhibited by the metal ion chelator EDTA, suggesting that this enzyme does not need a metal cofactor. Catalyzes the synthesis of levan, a fructose polymer, by transferring the fructosyl moiety from sucrose to a growing acceptor molecule. Also displays sucrose hydrolase activity. In vitro, catalyzes transfructosylation from sucrose to a variety of acceptors including water (sucrose hydrolysis), glucose (exchange reaction), fructan (polymerase reaction) and sucrose (oligofructoside synthesis). Levansucrase of G.diazotrophicus SRT4, unlike the enzyme of B.subtilis, causes accumulation of large quantities of tri- and tetrasaccharides but small quantities of high-molecular-mass levan. It may act more as a sucrose hydrolase than as a fructan polymerase, and may be the key enzyme in the sucrose metabolism of G.diazotrophicus SRT4. The polypeptide is Levansucrase (Gluconacetobacter diazotrophicus (Acetobacter diazotrophicus)).